The primary structure comprises 314 residues: Olfactory receptor 5P72 (314 aa).

At 1 to 28 the chain is on the extracellular side; sequence MAFLEVGNHTAVTEFILLGLTDDPVLRV. N8 is a glycosylation site (N-linked (GlcNAc...) asparagine). A helical membrane pass occupies residues 29–49; that stretch reads VLFTIILCIYLVTVMGNLSTI. The Cytoplasmic segment spans residues 50–57; it reads LLIRVSSQ. A helical transmembrane segment spans residues 58–78; that stretch reads LHHPMYFFLSHLASVDMGLSS. The Extracellular segment spans residues 79–102; the sequence is SVTPNMLLNFLIERNTISYLGCGI. A disulfide bond links C100 and C192. Residues 103 to 123 form a helical membrane-spanning segment; that stretch reads QQSLADFFGSVECFLLAAMAY. Topologically, residues 124–136 are cytoplasmic; it reads DRFMAICNPLLYS. A helical membrane pass occupies residues 137-157; that stretch reads TKMSTKVCVQLVVGSYIGGFL. Topologically, residues 158-199 are extracellular; sequence NASLIMFYFFSFLFCGPNRVDHFFCDFAPLVELSCSDVSVSV. The helical transmembrane segment at 200–220 threads the bilayer; that stretch reads IVISFSAGSVTMITVFVIAVS. Residues 221–240 are Cytoplasmic-facing; sequence YSYILITILKMHSIEGRHKA. The helical transmembrane segment at 241-261 threads the bilayer; it reads FSTCTSHLTAVTLYYGTITFI. Over 262–274 the chain is Extracellular; the sequence is YVMPKSSFSTDQN. A helical membrane pass occupies residues 275–295; that stretch reads KVVSVFYMVMIPMLNPLIYSL. Residues 296 to 314 lie on the Cytoplasmic side of the membrane; it reads RNNEIKGAIKRQLGKKMSC.

Belongs to the G-protein coupled receptor 1 family.

Its subcellular location is the cell membrane. Functionally, potential odorant receptor. This chain is Olfactory receptor 5P72, found in Mus musculus (Mouse).